Here is a 706-residue protein sequence, read N- to C-terminus: Elongation factor G (706 aa).

Positions 15 to 291 (LKTRNIGISA…GVLDYLASPV (277 aa)) constitute a tr-type G domain. GTP-binding positions include 24–31 (AHIDSGKT), 91–95 (DTPGH), and 145–148 (NKLD).

Belongs to the TRAFAC class translation factor GTPase superfamily. Classic translation factor GTPase family. EF-G/EF-2 subfamily.

It is found in the cytoplasm. Its function is as follows. Catalyzes the GTP-dependent ribosomal translocation step during translation elongation. During this step, the ribosome changes from the pre-translocational (PRE) to the post-translocational (POST) state as the newly formed A-site-bound peptidyl-tRNA and P-site-bound deacylated tRNA move to the P and E sites, respectively. Catalyzes the coordinated movement of the two tRNA molecules, the mRNA and conformational changes in the ribosome. This Leptospira borgpetersenii serovar Hardjo-bovis (strain JB197) protein is Elongation factor G.